The sequence spans 259 residues: 4-hydroxy-tetrahydrodipicolinate reductase (259 aa).

Residues 8–13 (GFAGAM), 94–96 (GTT), and 120–123 (APNF) each bind NAD(+). The active-site Proton donor/acceptor is the histidine 150. (S)-2,3,4,5-tetrahydrodipicolinate is bound at residue histidine 151. The Proton donor role is filled by lysine 154. (S)-2,3,4,5-tetrahydrodipicolinate is bound at residue 160–161 (GT).

The protein belongs to the DapB family.

It localises to the cytoplasm. The catalysed reaction is (S)-2,3,4,5-tetrahydrodipicolinate + NAD(+) + H2O = (2S,4S)-4-hydroxy-2,3,4,5-tetrahydrodipicolinate + NADH + H(+). It catalyses the reaction (S)-2,3,4,5-tetrahydrodipicolinate + NADP(+) + H2O = (2S,4S)-4-hydroxy-2,3,4,5-tetrahydrodipicolinate + NADPH + H(+). It participates in amino-acid biosynthesis; L-lysine biosynthesis via DAP pathway; (S)-tetrahydrodipicolinate from L-aspartate: step 4/4. Its function is as follows. Catalyzes the conversion of 4-hydroxy-tetrahydrodipicolinate (HTPA) to tetrahydrodipicolinate. In Limosilactobacillus fermentum (strain NBRC 3956 / LMG 18251) (Lactobacillus fermentum), this protein is 4-hydroxy-tetrahydrodipicolinate reductase.